We begin with the raw amino-acid sequence, 134 residues long: Global transcriptional regulator Spx (134 aa).

A disulfide bond links C10 and C13.

The protein belongs to the ArsC family. Spx subfamily. Interacts with the C-terminal domain of the alpha subunit of the RNAP.

The protein localises to the cytoplasm. Global transcriptional regulator that plays a key role in stress response and exerts either positive or negative regulation of genes. Acts by interacting with the C-terminal domain of the alpha subunit of the RNA polymerase (RNAP). This interaction can enhance binding of RNAP to the promoter region of target genes and stimulate their transcription, or block interaction of RNAP with activator. This is Global transcriptional regulator Spx from Streptococcus pyogenes serotype M3 (strain ATCC BAA-595 / MGAS315).